Reading from the N-terminus, the 471-residue chain is ATP synthase subunit beta (471 aa).

ATP is bound at residue 156–163 (GGAGVGKT).

This sequence belongs to the ATPase alpha/beta chains family. F-type ATPases have 2 components, CF(1) - the catalytic core - and CF(0) - the membrane proton channel. CF(1) has five subunits: alpha(3), beta(3), gamma(1), delta(1), epsilon(1). CF(0) has three main subunits: a(1), b(2) and c(9-12). The alpha and beta chains form an alternating ring which encloses part of the gamma chain. CF(1) is attached to CF(0) by a central stalk formed by the gamma and epsilon chains, while a peripheral stalk is formed by the delta and b chains.

The protein resides in the cell membrane. It catalyses the reaction ATP + H2O + 4 H(+)(in) = ADP + phosphate + 5 H(+)(out). Functionally, produces ATP from ADP in the presence of a proton gradient across the membrane. The catalytic sites are hosted primarily by the beta subunits. This is ATP synthase subunit beta from Staphylococcus carnosus (strain TM300).